Reading from the N-terminus, the 163-residue chain is Neurotrophin-3 (163 aa).

Positions 1-3 (IQS) are cleaved as a signal peptide. Positions 4 to 119 (TSMDQGILTE…VLNRTSRRKR (116 aa)) are excised as a propeptide. Asparagine 112 carries an N-linked (GlcNAc...) asparagine glycan.

It belongs to the NGF-beta family.

The protein resides in the secreted. Seems to promote the survival of visceral and proprioceptive sensory neurons. The sequence is that of Neurotrophin-3 (NTF3) from Eryx conicus (Rough-scaled sand boa).